The chain runs to 470 residues: Argininosuccinate lyase (470 aa).

Belongs to the lyase 1 family. Argininosuccinate lyase subfamily.

The protein resides in the cytoplasm. The enzyme catalyses 2-(N(omega)-L-arginino)succinate = fumarate + L-arginine. The protein operates within amino-acid biosynthesis; L-arginine biosynthesis; L-arginine from L-ornithine and carbamoyl phosphate: step 3/3. The sequence is that of Argininosuccinate lyase from Ehrlichia chaffeensis (strain ATCC CRL-10679 / Arkansas).